Reading from the N-terminus, the 264-residue chain is Thiazole synthase (264 aa).

The Schiff-base intermediate with DXP role is filled by Lys-106. 1-deoxy-D-xylulose 5-phosphate-binding positions include Gly-167, 193-194, and 215-216; these read AG and NS.

Belongs to the ThiG family. As to quaternary structure, homotetramer. Forms heterodimers with either ThiH or ThiS.

It localises to the cytoplasm. The catalysed reaction is [ThiS sulfur-carrier protein]-C-terminal-Gly-aminoethanethioate + 2-iminoacetate + 1-deoxy-D-xylulose 5-phosphate = [ThiS sulfur-carrier protein]-C-terminal Gly-Gly + 2-[(2R,5Z)-2-carboxy-4-methylthiazol-5(2H)-ylidene]ethyl phosphate + 2 H2O + H(+). The protein operates within cofactor biosynthesis; thiamine diphosphate biosynthesis. Its function is as follows. Catalyzes the rearrangement of 1-deoxy-D-xylulose 5-phosphate (DXP) to produce the thiazole phosphate moiety of thiamine. Sulfur is provided by the thiocarboxylate moiety of the carrier protein ThiS. In vitro, sulfur can be provided by H(2)S. The chain is Thiazole synthase from Prochlorococcus marinus (strain AS9601).